Consider the following 223-residue polypeptide: ATP synthase subunit a 1 (223 aa).

A run of 5 helical transmembrane segments spans residues 20 to 40, 78 to 98, 107 to 127, 173 to 193, and 194 to 214; these read QTIV…AFLT, YLSY…FTII, SLST…LYGI, VMII…LMSV, and LGLL…TVYI.

This sequence belongs to the ATPase A chain family. As to quaternary structure, F-type ATPases have 2 components, CF(1) - the catalytic core - and CF(0) - the membrane proton channel. CF(1) has five subunits: alpha(3), beta(3), gamma(1), delta(1), epsilon(1). CF(0) has four main subunits: a, b, b' and c.

The protein localises to the cell inner membrane. Functionally, key component of the proton channel; it plays a direct role in the translocation of protons across the membrane. The protein is ATP synthase subunit a 1 of Prosthecochloris aestuarii (strain DSM 271 / SK 413).